A 102-amino-acid chain; its full sequence is Small ribosomal subunit protein uS10 (102 aa).

Residues 33–59 (RMSGPIPLPTKRIRITTRKSPDGEGSA) are disordered.

This sequence belongs to the universal ribosomal protein uS10 family. As to quaternary structure, part of the 30S ribosomal subunit.

Involved in the binding of tRNA to the ribosomes. The protein is Small ribosomal subunit protein uS10 of Pyrococcus furiosus (strain ATCC 43587 / DSM 3638 / JCM 8422 / Vc1).